The chain runs to 250 residues: Pyrroloquinoline-quinone synthase (250 aa).

Belongs to the PqqC family.

The catalysed reaction is 6-(2-amino-2-carboxyethyl)-7,8-dioxo-1,2,3,4,7,8-hexahydroquinoline-2,4-dicarboxylate + 3 O2 = pyrroloquinoline quinone + 2 H2O2 + 2 H2O + H(+). It functions in the pathway cofactor biosynthesis; pyrroloquinoline quinone biosynthesis. Functionally, ring cyclization and eight-electron oxidation of 3a-(2-amino-2-carboxyethyl)-4,5-dioxo-4,5,6,7,8,9-hexahydroquinoline-7,9-dicarboxylic-acid to PQQ. The sequence is that of Pyrroloquinoline-quinone synthase from Xanthomonas euvesicatoria pv. vesicatoria (strain 85-10) (Xanthomonas campestris pv. vesicatoria).